The chain runs to 276 residues: 3,4-dihydroxyphenylacetate 2,3-dioxygenase (276 aa).

The cofactor is Fe cation.

It carries out the reaction 3,4-dihydroxyphenylacetate + O2 = 2-hydroxy-5-carboxymethylmuconate semialdehyde + H(+). It functions in the pathway aromatic compound metabolism; 4-hydroxyphenylacetate degradation; pyruvate and succinate semialdehyde from 4-hydroxyphenylacetate: step 2/7. Functionally, transforms homoprotocatechuic acid (HPC) into 5-carboxymethyl-2-hydroxy-muconic semialdehyde (CHMS). The chain is 3,4-dihydroxyphenylacetate 2,3-dioxygenase (hpcB) from Escherichia coli.